The chain runs to 71 residues: Large ribosomal subunit protein bL31 (71 aa).

Positions 16, 18, 37, and 40 each coordinate Zn(2+).

This sequence belongs to the bacterial ribosomal protein bL31 family. Type A subfamily. As to quaternary structure, part of the 50S ribosomal subunit. The cofactor is Zn(2+).

Functionally, binds the 23S rRNA. This Yersinia pseudotuberculosis serotype O:1b (strain IP 31758) protein is Large ribosomal subunit protein bL31.